The following is a 179-amino-acid chain: Segregation and condensation protein B (179 aa).

The protein belongs to the ScpB family. Homodimer. Homodimerization may be required to stabilize the binding of ScpA to the Smc head domains. Component of a cohesin-like complex composed of ScpA, ScpB and the Smc homodimer, in which ScpA and ScpB bind to the head domain of Smc. The presence of the three proteins is required for the association of the complex with DNA.

The protein resides in the cytoplasm. Participates in chromosomal partition during cell division. May act via the formation of a condensin-like complex containing Smc and ScpA that pull DNA away from mid-cell into both cell halves. The polypeptide is Segregation and condensation protein B (Streptococcus equi subsp. zooepidemicus (strain H70)).